The sequence spans 35 residues: Photosystem II reaction center protein T (35 aa).

The chain crosses the membrane as a helical span at residues 3–23 (ALVYTFLLVSTLGIIFFAIFF).

It belongs to the PsbT family. As to quaternary structure, PSII is composed of 1 copy each of membrane proteins PsbA, PsbB, PsbC, PsbD, PsbE, PsbF, PsbH, PsbI, PsbJ, PsbK, PsbL, PsbM, PsbT, PsbY, PsbZ, Psb30/Ycf12, at least 3 peripheral proteins of the oxygen-evolving complex and a large number of cofactors. It forms dimeric complexes.

The protein resides in the plastid. It is found in the chloroplast thylakoid membrane. In terms of biological role, found at the monomer-monomer interface of the photosystem II (PS II) dimer, plays a role in assembly and dimerization of PSII. PSII is a light-driven water plastoquinone oxidoreductase, using light energy to abstract electrons from H(2)O, generating a proton gradient subsequently used for ATP formation. This is Photosystem II reaction center protein T from Cabomba caroliniana (Carolina fanwort).